A 433-amino-acid polypeptide reads, in one-letter code: Divergent protein kinase domain 2B (433 aa).

The signal sequence occupies residues 1–31; sequence MEPQLGPEAAALRPGWLALLLWVSALSCSFS. Residue Asn-100 is glycosylated (N-linked (GlcNAc...) asparagine).

Belongs to the DIPK family.

It is found in the secreted. This chain is Divergent protein kinase domain 2B, found in Homo sapiens (Human).